Consider the following 87-residue polypeptide: Small ribosomal subunit protein uS17 (87 aa).

It belongs to the universal ribosomal protein uS17 family. In terms of assembly, part of the 30S ribosomal subunit.

In terms of biological role, one of the primary rRNA binding proteins, it binds specifically to the 5'-end of 16S ribosomal RNA. In Exiguobacterium sibiricum (strain DSM 17290 / CCUG 55495 / CIP 109462 / JCM 13490 / 255-15), this protein is Small ribosomal subunit protein uS17.